The chain runs to 419 residues: tRNA(Met) cytidine acetate ligase (419 aa).

Residues 7–20 (ITEY…HLHH), G101, N163, and R188 contribute to the ATP site.

This sequence belongs to the TmcAL family.

The protein localises to the cytoplasm. The enzyme catalyses cytidine(34) in elongator tRNA(Met) + acetate + ATP = N(4)-acetylcytidine(34) in elongator tRNA(Met) + AMP + diphosphate. Functionally, catalyzes the formation of N(4)-acetylcytidine (ac(4)C) at the wobble position of elongator tRNA(Met), using acetate and ATP as substrates. First activates an acetate ion to form acetyladenylate (Ac-AMP) and then transfers the acetyl group to tRNA to form ac(4)C34. The polypeptide is tRNA(Met) cytidine acetate ligase (Syntrophotalea carbinolica (strain DSM 2380 / NBRC 103641 / GraBd1) (Pelobacter carbinolicus)).